A 451-amino-acid polypeptide reads, in one-letter code: uncharacterized protein (451 aa).

Transmembrane regions (helical) follow at residues 13-33 (IGFV…WKFP), 41-61 (GGAF…PLLV), 97-117 (ACFL…LYIV), 142-162 (NPVQ…LVVA), 174-194 (AVMM…SLTL), 217-237 (ILFA…VMVT), 255-275 (IVLM…PAVF), 299-319 (LPFG…AALT), 345-365 (WTSG…YGVL), 381-401 (FTVS…FIPL), and 429-449 (LLRF…IGIL).

The protein belongs to the sodium:neurotransmitter symporter (SNF) (TC 2.A.22) family.

Its subcellular location is the cell membrane. Its function is as follows. Putative sodium-dependent transporter. This is an uncharacterized protein from Bacillus subtilis (strain 168).